Consider the following 313-residue polypeptide: Protein FixB (313 aa).

Residue 255-283 participates in FAD binding; the sequence is LYLAVGISGQIQHMVGANASQTIFAINKD.

This sequence belongs to the ETF alpha-subunit/FixB family. Heterodimer of FixA and FixB.

It participates in amine and polyamine metabolism; carnitine metabolism. Required for anaerobic carnitine reduction. May bring reductant to CaiA. The chain is Protein FixB from Escherichia coli O139:H28 (strain E24377A / ETEC).